The sequence spans 709 residues: Acyl-coenzyme A oxidase 4 (709 aa).

The segment covering 1–12 has biased composition (polar residues); sequence MTFTKKNVSVSQ. Residues 1 to 29 are disordered; it reads MTFTKKNVSVSQGPDPRSSIQKERDSSKW.

Belongs to the acyl-CoA oxidase family. Homooctamer. FAD is required as a cofactor.

It is found in the peroxisome. It carries out the reaction a 2,3-saturated acyl-CoA + O2 = a (2E)-enoyl-CoA + H2O2. It participates in lipid metabolism; peroxisomal fatty acid beta-oxidation. The sequence is that of Acyl-coenzyme A oxidase 4 (POX4) from Candida tropicalis (Yeast).